The chain runs to 146 residues: Large ribosomal subunit protein uL15 (146 aa).

A disordered region spans residues 1 to 64; sequence MQLNTIKPAI…MPMHRRLPKR (64 aa). A compositionally biased stretch (basic residues) spans 30–39; that stretch reads TATKGHKGQK.

Belongs to the universal ribosomal protein uL15 family. In terms of assembly, part of the 50S ribosomal subunit.

Binds to the 23S rRNA. The chain is Large ribosomal subunit protein uL15 from Geobacter sp. (strain M21).